The sequence spans 387 residues: MSVIKMTDLDLAGKRVFIRADLNVPVKDGKVTSDARIRASLPTIELALKQGAKVMVTSHLGRPTEGEYNEEFSLLPVVNYLKDKLSNPVRLVKDYLDGVEVAAGELVVLENVRFNKGEKKDDEALSKKYAALCDVFVMDAFGTAHRAQASTHGIGKFADVACAGPLLAAELDALGKALKEPARPMVAIVGGSKVSTKLTVLDSLSKIADQLIVGGGIANTFVAAQGHNVGKSLYEADLVDEAKRLLSTCDIPVPTDVRVATEFSETATATLKSVNDIKDDEQILDLGDVSAQKLADILKNAKTILWNGPVGVFEFPNFRKGTEIVANAIADSEGFSIAGGGDTLAAIDLFGIADKISYISTGGGAFLEFVEGKVLPAVAMLEERAKQ.

Substrate-binding positions include 21 to 23 (DLN), Arg36, 59 to 62 (HLGR), Arg113, and Arg146. Residues Lys197, Glu314, and 340 to 343 (GGDT) contribute to the ATP site.

Belongs to the phosphoglycerate kinase family. As to quaternary structure, monomer.

The protein localises to the cytoplasm. The enzyme catalyses (2R)-3-phosphoglycerate + ATP = (2R)-3-phospho-glyceroyl phosphate + ADP. It participates in carbohydrate degradation; glycolysis; pyruvate from D-glyceraldehyde 3-phosphate: step 2/5. The protein is Phosphoglycerate kinase of Klebsiella pneumoniae (strain 342).